The following is a 119-amino-acid chain: MEAKAILRDTPTSPRKMRLVAGLVRGKPVDLAKAILLNSTKAASRNVMMTLKSAVANYAQRNPDERVSDQELFVKTIFVDEGTTLKRTLPAPMGRAFRIRKRSNHLTIVIDKVKNPVTK.

It belongs to the universal ribosomal protein uL22 family. As to quaternary structure, part of the 50S ribosomal subunit.

In terms of biological role, this protein binds specifically to 23S rRNA; its binding is stimulated by other ribosomal proteins, e.g. L4, L17, and L20. It is important during the early stages of 50S assembly. It makes multiple contacts with different domains of the 23S rRNA in the assembled 50S subunit and ribosome. Its function is as follows. The globular domain of the protein is located near the polypeptide exit tunnel on the outside of the subunit, while an extended beta-hairpin is found that lines the wall of the exit tunnel in the center of the 70S ribosome. The polypeptide is Large ribosomal subunit protein uL22 (Pelodictyon phaeoclathratiforme (strain DSM 5477 / BU-1)).